The chain runs to 270 residues: 3-phenylpropionate-dihydrodiol/cinnamic acid-dihydrodiol dehydrogenase (270 aa).

An NAD(+)-binding site is contributed by 10–34 (FITGGGSGLGLALVERFIEEGAQVA). Serine 143 contacts substrate. The active-site Proton acceptor is the tyrosine 156.

Belongs to the short-chain dehydrogenases/reductases (SDR) family.

It catalyses the reaction 3-(cis-5,6-dihydroxycyclohexa-1,3-dien-1-yl)propanoate + NAD(+) = 3-(2,3-dihydroxyphenyl)propanoate + NADH + H(+). The catalysed reaction is (2E)-3-(cis-5,6-dihydroxycyclohexa-1,3-dien-1-yl)prop-2-enoate + NAD(+) = (2E)-3-(2,3-dihydroxyphenyl)prop-2-enoate + NADH + H(+). It participates in aromatic compound metabolism; 3-phenylpropanoate degradation. Functionally, converts 3-phenylpropionate-dihydrodiol (PP-dihydrodiol) and cinnamic acid-dihydrodiol (CI-dihydrodiol) into 3-(2,3-dihydroxylphenyl)propanoic acid (DHPP) and 2,3-dihydroxicinnamic acid (DHCI), respectively. This is 3-phenylpropionate-dihydrodiol/cinnamic acid-dihydrodiol dehydrogenase from Escherichia coli O7:K1 (strain IAI39 / ExPEC).